Consider the following 177-residue polypeptide: Large ribosomal subunit protein uL6 (177 aa).

Belongs to the universal ribosomal protein uL6 family. As to quaternary structure, part of the 50S ribosomal subunit.

Its function is as follows. This protein binds to the 23S rRNA, and is important in its secondary structure. It is located near the subunit interface in the base of the L7/L12 stalk, and near the tRNA binding site of the peptidyltransferase center. The protein is Large ribosomal subunit protein uL6 of Chromobacterium violaceum (strain ATCC 12472 / DSM 30191 / JCM 1249 / CCUG 213 / NBRC 12614 / NCIMB 9131 / NCTC 9757 / MK).